The sequence spans 138 residues: Sporulation-specific cell division protein SsgB (138 aa).

Belongs to the SsgA family. In terms of assembly, monomer. Interacts with SsgA. Interacts with FtsZ (via N-terminus).

It is found in the cell septum. In terms of biological role, involved in sporulation-specific cell division. Required for early stages of sporulation. Important in the process of growth cessation prior to sporulation-specific cell division. Recruits cell division protein FtsZ to the future septum sites and tethers the contractile ring structure (Z ring) to the cytoplasmic membrane during sporulation. Stimulates polymerization and filament length of FtsZ in vitro. The sequence is that of Sporulation-specific cell division protein SsgB from Thermobifida fusca (strain YX).